Reading from the N-terminus, the 452-residue chain is Activating transcription factor 7-interacting protein 2 (452 aa).

Phosphoserine is present on Ser184. Residues 185–206 (RSKRISSVNHTPLNSSEKAGRK) form a disordered region. The residue at position 257 (Ser257) is a Phosphoserine. A Fibronectin type-III domain is found at 346–450 (PPQKPELKVK…IKSIPRFSEN (105 aa)).

Belongs to the MCAF family. In terms of assembly, interacts with MBD1, SETDB1 and SP1. Probably forms a complex with SETDB1 and MBD1. Expressed in testis.

The protein localises to the nucleus. In terms of biological role, recruiter that couples transcriptional factors to general transcription apparatus and thereby modulates transcription regulation and chromatin formation. Can both act as an activator or a repressor depending on the context. Mediates MBD1-dependent transcriptional repression, probably by recruiting complexes containing SETDB1. The complex formed with MBD1 and SETDB1 represses transcription and probably couples DNA methylation and histone H3 'Lys-9' trimethylation (H3K9me3) activity. This is Activating transcription factor 7-interacting protein 2 (Atf7ip2) from Mus musculus (Mouse).